Here is a 76-residue protein sequence, read N- to C-terminus: Large ribosomal subunit protein uL29 (76 aa).

This sequence belongs to the universal ribosomal protein uL29 family.

The protein is Large ribosomal subunit protein uL29 of Corynebacterium diphtheriae (strain ATCC 700971 / NCTC 13129 / Biotype gravis).